The sequence spans 246 residues: MTPSIDALRDFRASTCNLVGTPTVTNDLSENIILTSLDDLHNWARLSSLWPLLYGTACCFIEFAALIGSRFDFDRFGLVPRSSPRQADLIIVAGTVTMKMAPALVRLYEQMPEPKYVIAMGACTITGGMFSSDSTTAVRGVDKLIPVDLYLPGCPPRPEAIFDAVIKLRKKVGNEALRERGKLLPTHRYFTVAHKMKQVKPIITGTYLRAKTQQNALQAGVALPVDFKAEALPTKVILSNSLSLDN.

[4Fe-4S] cluster is bound by residues Cys58, Cys59, Cys123, and Cys154.

It belongs to the complex I 20 kDa subunit family. NDH-1 is composed of 14 different subunits. Subunits nuoB, C, D, E, F, and G constitute the peripheral sector of the complex. Requires [4Fe-4S] cluster as cofactor.

The protein resides in the plastid. It is found in the organellar chromatophore thylakoid membrane. The enzyme catalyses a quinone + NADH + H(+) = a quinol + NAD(+). Its function is as follows. NDH-1 shuttles electrons from NADH, via FMN and iron-sulfur (Fe-S) centers, to quinones in the respiratory chain. Couples the redox reaction to proton translocation (for every two electrons transferred, four hydrogen ions are translocated across the cytoplasmic membrane), and thus conserves the redox energy in a proton gradient. The protein is NAD(P)H-quinone oxidoreductase subunit K, organellar chromatophore of Paulinella chromatophora.